Here is a 1014-residue protein sequence, read N- to C-terminus: Chondroitin sulfate ABC exolyase (1014 aa).

Positions 1-14 (MLILSFLCPAFLNA) are cleaved as a signal peptide. The Ca(2+) site is built by Ser24, Glu26, Asp50, His53, and Asp161. Catalysis depends on proton acceptor residues His345 and His454. Tyr461 (proton donor) is an active-site residue.

It belongs to the polysaccharide lyase 8 family. Monomer. Ca(2+) is required as a cofactor. It depends on Mg(2+) as a cofactor.

It localises to the periplasm. The catalysed reaction is Exolytic removal of Delta(4)-unsaturated disaccharide residues from the non-reducing ends of both polymeric chondroitin/dermatan sulfates and their oligosaccharide fragments.. Specific activity for chondroitin sulfate substrates increases moderately (2-fold) while an increase of 25-fold is observed for dermatan sulfate as substrate upon addition of Ca(2+) or Mg(2+) ions. Increasing the concentration of Na(+), K(+) or Cs(+) chloride from 0 to 0.1 M, increases the activity against all substrates. Further increases in salt concentration reduces the activity dramatically, with 50% inhibition occurring at 0.15 M and nearly complete inhibition at 0.4 M salt. The addition of 10 mM Ca(2+) or Mg(2+) ions increases the activity against chondroitin 4- and 6-sulfates by 2-3-fold, while the activity against dermatan sulfate increases much more significantly by 50-fold. Addition of Mn(2+) and Zn(2+) reduces activity against chondroitin sulfate substrates, but increases the activity against dermatan sulfate. Increasing the concentration of CaCl(2) with both chondroitin 4- and 6-sulfates from 0 to 0.04 M increases the activity. A further increase reduces activity, with 50% inhibition at 0.065-0.085 M and a complete inhibition of the reaction at 0.2 M. In case of dermatan sulfate, the addition of low concentration of CaCl(2) dramatically increases the activity from the basal level. The maximal activity is reached at 0.01 M CaCl(2). In terms of biological role, broad-specificity glycosaminoglycan lyase, which acts in an exolytic fashion degrading chondroitin sulfates and dermatan sulfate to yield only disaccharide products. Has a preference for chondroitin 4-sulfate over chondroitin 6-sulfate. Has extremely low activity against hyaluronic acid. Is not active against acharan sulfate, heparin or heparan sulfate. The sequence is that of Chondroitin sulfate ABC exolyase (chonabc) from Bacteroides thetaiotaomicron.